The primary structure comprises 117 residues: Large ribosomal subunit protein bL17 (117 aa).

The protein belongs to the bacterial ribosomal protein bL17 family. In terms of assembly, part of the 50S ribosomal subunit. Contacts protein L32.

The sequence is that of Large ribosomal subunit protein bL17 from Campylobacter jejuni subsp. doylei (strain ATCC BAA-1458 / RM4099 / 269.97).